The following is a 288-amino-acid chain: Bifunctional protein FolD (288 aa).

NADP(+) is bound by residues 166–168 (GAS) and I232.

It belongs to the tetrahydrofolate dehydrogenase/cyclohydrolase family. Homodimer.

It catalyses the reaction (6R)-5,10-methylene-5,6,7,8-tetrahydrofolate + NADP(+) = (6R)-5,10-methenyltetrahydrofolate + NADPH. The enzyme catalyses (6R)-5,10-methenyltetrahydrofolate + H2O = (6R)-10-formyltetrahydrofolate + H(+). The protein operates within one-carbon metabolism; tetrahydrofolate interconversion. Catalyzes the oxidation of 5,10-methylenetetrahydrofolate to 5,10-methenyltetrahydrofolate and then the hydrolysis of 5,10-methenyltetrahydrofolate to 10-formyltetrahydrofolate. This Escherichia coli (strain UTI89 / UPEC) protein is Bifunctional protein FolD.